We begin with the raw amino-acid sequence, 151 residues long: Probable ubiquitin-conjugating enzyme E2 W-A (151 aa).

A UBC core domain is found at 3-151; that stretch reads SMQKRLQKEL…TKWWYHDDTC (149 aa). Cys-91 serves as the catalytic Glycyl thioester intermediate.

Belongs to the ubiquitin-conjugating enzyme family.

Its subcellular location is the nucleus. The enzyme catalyses S-ubiquitinyl-[E1 ubiquitin-activating enzyme]-L-cysteine + [E2 ubiquitin-conjugating enzyme]-L-cysteine = [E1 ubiquitin-activating enzyme]-L-cysteine + S-ubiquitinyl-[E2 ubiquitin-conjugating enzyme]-L-cysteine.. It catalyses the reaction S-ubiquitinyl-[E1 ubiquitin-activating enzyme]-L-cysteine + [acceptor protein]-N-terminal-amino acid = [E1 ubiquitin-activating enzyme]-L-cysteine + N-terminal-ubiquitinyl-[acceptor protein].. It functions in the pathway protein modification; protein ubiquitination. Accepts ubiquitin from the E1 complex and catalyzes its covalent attachment to other proteins. Catalyzes monoubiquitination. Involved in degradation of misfolded chaperone substrate and DNA repair. This chain is Probable ubiquitin-conjugating enzyme E2 W-A (ube2wa), found in Danio rerio (Zebrafish).